The primary structure comprises 317 residues: Ubiquinone biosynthesis protein COQ9, mitochondrial (317 aa).

The transit peptide at 1–46 directs the protein to the mitochondrion; it reads MAASVARVLKAAGGRQLLLMVARRRPVLRQPFLLMPRKFWGTSALR. Positions 45–97 are disordered; it reads LRSEDQKQPPFSSTSAHAGTPEHAEEQYQQQQPPPRYTDQAGEESEGYESEEQ. Acidic residues predominate over residues 85 to 96; sequence AGEESEGYESEE. R243 serves as a coordination point for a 1,2-diacylglycero-3-phosphoethanolamine.

The protein belongs to the COQ9 family. In terms of assembly, homodimer. Heterodimer; two heterodimers of COQ7:COQ9 come together on the same side of the lipid pseudo-bilayer and form a curved tetramer with a hydrophobic surface suitable for membrane interaction. These two tetramers assemble into a soluble octamer with a pseudo-bilayer of lipids captured within. Interacts with COQ7; this interaction allows ubiquinone (CoQ) isoprene intermediates presentation to COQ7 and facilitates the COQ7-mediated hydroxylase step.

It localises to the mitochondrion. The protein operates within cofactor biosynthesis; ubiquinone biosynthesis. Functionally, membrane-associated protein that warps the membrane surface to access and bind aromatic isoprenes with high specificity, including ubiquinone (CoQ) isoprene intermediates and presents them directly to COQ7, therefore facilitating the COQ7-mediated hydroxylase step. Participates in the biosynthesis of coenzyme Q, also named ubiquinone, an essential lipid-soluble electron transporter for aerobic cellular respiration. In Xenopus tropicalis (Western clawed frog), this protein is Ubiquinone biosynthesis protein COQ9, mitochondrial.